Consider the following 92-residue polypeptide: Cell division protein FtsB (92 aa).

Topologically, residues 1–3 (MRL) are cytoplasmic. Residues 4 to 21 (LILILLSVLVLFQYNFWF) form a helical membrane-spanning segment. At 22–92 (GSNGFLDYRQ…VFYHIVKESK (71 aa)) the chain is on the periplasmic side. Residues 28-63 (DYRQNAEKIKENQAENEKLSQRNQRINAEIQGLTKG) adopt a coiled-coil conformation.

It belongs to the FtsB family. In terms of assembly, part of a complex composed of FtsB, FtsL and FtsQ.

The protein resides in the cell inner membrane. Functionally, essential cell division protein. May link together the upstream cell division proteins, which are predominantly cytoplasmic, with the downstream cell division proteins, which are predominantly periplasmic. In Haemophilus influenzae (strain 86-028NP), this protein is Cell division protein FtsB.